Here is a 130-residue protein sequence, read N- to C-terminus: Small ribosomal subunit protein uS9 (130 aa).

The protein belongs to the universal ribosomal protein uS9 family.

This is Small ribosomal subunit protein uS9 from Pseudomonas paraeruginosa (strain DSM 24068 / PA7) (Pseudomonas aeruginosa (strain PA7)).